The sequence spans 338 residues: tRNA-specific 2-thiouridylase MnmA (338 aa).

Residues 6 to 13 (AMSGGVDS) and Met-32 contribute to the ATP site. Cys-92 acts as the Nucleophile in catalysis. A disulfide bridge connects residues Cys-92 and Cys-186. Gly-116 contributes to the ATP binding site. The interval 134-136 (KDQ) is interaction with tRNA. Cys-186 (cysteine persulfide intermediate) is an active-site residue. The interval 288–289 (RY) is interaction with tRNA.

This sequence belongs to the MnmA/TRMU family.

It is found in the cytoplasm. It catalyses the reaction S-sulfanyl-L-cysteinyl-[protein] + uridine(34) in tRNA + AH2 + ATP = 2-thiouridine(34) in tRNA + L-cysteinyl-[protein] + A + AMP + diphosphate + H(+). Catalyzes the 2-thiolation of uridine at the wobble position (U34) of tRNA, leading to the formation of s(2)U34. The protein is tRNA-specific 2-thiouridylase MnmA of Campylobacter lari (strain RM2100 / D67 / ATCC BAA-1060).